The sequence spans 466 residues: Glutamate--tRNA ligase (466 aa).

A 'HIGH' region motif is present at residues 11–21 (PSPTGFIHLGN). A 'KMSKS' region motif is present at residues 243 to 247 (KMSKR). Lys-246 lines the ATP pocket.

Belongs to the class-I aminoacyl-tRNA synthetase family. Glutamate--tRNA ligase type 1 subfamily. In terms of assembly, monomer.

The protein localises to the cytoplasm. It catalyses the reaction tRNA(Glu) + L-glutamate + ATP = L-glutamyl-tRNA(Glu) + AMP + diphosphate. Its function is as follows. Catalyzes the attachment of glutamate to tRNA(Glu) in a two-step reaction: glutamate is first activated by ATP to form Glu-AMP and then transferred to the acceptor end of tRNA(Glu). In Cupriavidus taiwanensis (strain DSM 17343 / BCRC 17206 / CCUG 44338 / CIP 107171 / LMG 19424 / R1) (Ralstonia taiwanensis (strain LMG 19424)), this protein is Glutamate--tRNA ligase.